Here is a 525-residue protein sequence, read N- to C-terminus: Peptide chain release factor 3 (525 aa).

The region spanning 11-279 (ERRRTFAIIS…AFVDMAPAPE (269 aa)) is the tr-type G domain. GTP-binding positions include 20–27 (SHPDAGKT), 88–92 (DTPGH), and 142–145 (NKLD).

Belongs to the TRAFAC class translation factor GTPase superfamily. Classic translation factor GTPase family. PrfC subfamily.

It is found in the cytoplasm. In terms of biological role, increases the formation of ribosomal termination complexes and stimulates activities of RF-1 and RF-2. It binds guanine nucleotides and has strong preference for UGA stop codons. It may interact directly with the ribosome. The stimulation of RF-1 and RF-2 is significantly reduced by GTP and GDP, but not by GMP. The chain is Peptide chain release factor 3 from Latilactobacillus sakei subsp. sakei (strain 23K) (Lactobacillus sakei subsp. sakei).